A 286-amino-acid chain; its full sequence is CCR4-NOT transcription complex subunit 7 (286 aa).

A divalent metal cation-binding residues include Asp40, Glu42, Asp161, Asp230, and Glu278.

Belongs to the CAF1 family. Component of the CCR4-NOT complex. The cofactor is Mn(2+). Mg(2+) is required as a cofactor. Co(2+) serves as cofactor.

It localises to the nucleus. The protein localises to the cytoplasm. The enzyme catalyses Exonucleolytic cleavage of poly(A) to 5'-AMP.. Functionally, has 3'-5' poly(A) exoribonuclease activity for synthetic poly(A) RNA substrate. Catalytic component of the CCR4-NOT complex which is one of the major cellular mRNA deadenylases and is linked to various cellular processes including bulk mRNA degradation, miRNA-mediated repression, translational repression during translational initiation and general transcription regulation. During miRNA-mediated repression the complex also seems to act as translational repressor during translational initiation. Additional complex functions may be a consequence of its influence on mRNA expression. This is CCR4-NOT transcription complex subunit 7 (cnot7) from Danio rerio (Zebrafish).